Here is a 432-residue protein sequence, read N- to C-terminus: UDP-N-acetylglucosamine 1-carboxyvinyltransferase (432 aa).

22–23 (KN) is a binding site for phosphoenolpyruvate. Arginine 101 contacts UDP-N-acetyl-alpha-D-glucosamine. The active-site Proton donor is the cysteine 125. Residue cysteine 125 is modified to 2-(S-cysteinyl)pyruvic acid O-phosphothioketal. UDP-N-acetyl-alpha-D-glucosamine contacts are provided by residues 130–134 (RPVDL), aspartate 315, and isoleucine 337.

This sequence belongs to the EPSP synthase family. MurA subfamily.

The protein localises to the cytoplasm. It catalyses the reaction phosphoenolpyruvate + UDP-N-acetyl-alpha-D-glucosamine = UDP-N-acetyl-3-O-(1-carboxyvinyl)-alpha-D-glucosamine + phosphate. Its pathway is cell wall biogenesis; peptidoglycan biosynthesis. In terms of biological role, cell wall formation. Adds enolpyruvyl to UDP-N-acetylglucosamine. The protein is UDP-N-acetylglucosamine 1-carboxyvinyltransferase of Paramagnetospirillum magneticum (strain ATCC 700264 / AMB-1) (Magnetospirillum magneticum).